Here is a 473-residue protein sequence, read N- to C-terminus: Photosystem II CP43 reaction center protein (473 aa).

The propeptide occupies 1–14 (MKILYSPRRFYPVE). Thr15 carries the post-translational modification N-acetylthreonine. Position 15 is a phosphothreonine (Thr15). The next 5 membrane-spanning stretches (helical) occupy residues 69–93 (LFEV…PHLA), 134–155 (IIGP…KDKN), 178–200 (KALY…RKIT), 255–275 (KPFA…LSYS), and 291–312 (WFNN…ASQA). A [CaMn4O5] cluster-binding site is contributed by Glu367. A helical membrane pass occupies residues 447 to 471 (RARAAAAGFEKGIDRDFEPVLSTTP).

This sequence belongs to the PsbB/PsbC family. PsbC subfamily. In terms of assembly, PSII is composed of 1 copy each of membrane proteins PsbA, PsbB, PsbC, PsbD, PsbE, PsbF, PsbH, PsbI, PsbJ, PsbK, PsbL, PsbM, PsbT, PsbX, PsbY, PsbZ, Psb30/Ycf12, at least 3 peripheral proteins of the oxygen-evolving complex and a large number of cofactors. It forms dimeric complexes. The cofactor is Binds multiple chlorophylls and provides some of the ligands for the Ca-4Mn-5O cluster of the oxygen-evolving complex. It may also provide a ligand for a Cl- that is required for oxygen evolution. PSII binds additional chlorophylls, carotenoids and specific lipids..

It is found in the plastid. Its subcellular location is the chloroplast thylakoid membrane. Its function is as follows. One of the components of the core complex of photosystem II (PSII). It binds chlorophyll and helps catalyze the primary light-induced photochemical processes of PSII. PSII is a light-driven water:plastoquinone oxidoreductase, using light energy to abstract electrons from H(2)O, generating O(2) and a proton gradient subsequently used for ATP formation. The sequence is that of Photosystem II CP43 reaction center protein from Huperzia lucidula (Shining clubmoss).